The primary structure comprises 470 residues: Light-independent protochlorophyllide reductase subunit N (470 aa).

Residues C22, C47, and C107 each contribute to the [4Fe-4S] cluster site.

The protein belongs to the BchN/ChlN family. In terms of assembly, protochlorophyllide reductase is composed of three subunits; ChlL, ChlN and ChlB. Forms a heterotetramer of two ChlB and two ChlN subunits. It depends on [4Fe-4S] cluster as a cofactor.

It localises to the plastid. The protein localises to the chloroplast. The catalysed reaction is chlorophyllide a + oxidized 2[4Fe-4S]-[ferredoxin] + 2 ADP + 2 phosphate = protochlorophyllide a + reduced 2[4Fe-4S]-[ferredoxin] + 2 ATP + 2 H2O. Its pathway is porphyrin-containing compound metabolism; chlorophyll biosynthesis (light-independent). Functionally, component of the dark-operative protochlorophyllide reductase (DPOR) that uses Mg-ATP and reduced ferredoxin to reduce ring D of protochlorophyllide (Pchlide) to form chlorophyllide a (Chlide). This reaction is light-independent. The NB-protein (ChlN-ChlB) is the catalytic component of the complex. In Pinus koraiensis (Korean pine), this protein is Light-independent protochlorophyllide reductase subunit N.